A 607-amino-acid polypeptide reads, in one-letter code: DNA mismatch repair protein MutL (607 aa).

It belongs to the DNA mismatch repair MutL/HexB family.

Functionally, this protein is involved in the repair of mismatches in DNA. It is required for dam-dependent methyl-directed DNA mismatch repair. May act as a 'molecular matchmaker', a protein that promotes the formation of a stable complex between two or more DNA-binding proteins in an ATP-dependent manner without itself being part of a final effector complex. This chain is DNA mismatch repair protein MutL, found in Anaeromyxobacter dehalogenans (strain 2CP-1 / ATCC BAA-258).